A 150-amino-acid chain; its full sequence is 16.9 kDa class I heat shock protein 1 (150 aa).

The interval 1 to 42 is important for thermostability under elevated temperature; that stretch reads MSLVRRSNVFDPFSLDLWDPFDSVFRSVVPATSDNDTAAFAN. In terms of domain architecture, sHSP spans 36-150; the sequence is DTAAFANARI…PEVKAIEISG (115 aa).

This sequence belongs to the small heat shock protein (HSP20) family. In terms of assembly, forms oligomeric structures.

It localises to the cytoplasm. The polypeptide is 16.9 kDa class I heat shock protein 1 (HSP16.9A) (Oryza sativa subsp. japonica (Rice)).